A 644-amino-acid polypeptide reads, in one-letter code: Ribonuclease R (644 aa).

The region spanning 211-529 is the RNB domain; sequence RINYSHIPFI…LHRLLKELLF (319 aa). Residues 573–644 enclose the S1 motif domain; that stretch reads LEFLEKEFLG…ITERIKEHVS (72 aa).

The protein belongs to the RNR ribonuclease family. RNase R subfamily.

Its subcellular location is the cytoplasm. It carries out the reaction Exonucleolytic cleavage in the 3'- to 5'-direction to yield nucleoside 5'-phosphates.. Its function is as follows. 3'-5' exoribonuclease that releases 5'-nucleoside monophosphates and is involved in maturation of structured RNAs. The polypeptide is Ribonuclease R (Helicobacter pylori (strain J99 / ATCC 700824) (Campylobacter pylori J99)).